Here is a 378-residue protein sequence, read N- to C-terminus: Pre-B-cell leukemia transcription factor 4 (378 aa).

Over residues 1–15 (MAAPLRPVPPQPAPR) the composition is skewed to pro residues. 2 disordered regions span residues 1–24 (MAAP…APLG) and 100–125 (VSRP…PNDN). In terms of domain architecture, PBC spans 22–214 (PLGHDTSDVL…VMTLRSRFLD (193 aa)). The segment at 29–107 (DVLQQIMAIT…EGVSRPEKRG (79 aa)) is PBC-A. Residues 109-120 (GAAAGSTATPGG) are compositionally biased toward low complexity. The interval 110-214 (AAAGSTATPG…VMTLRSRFLD (105 aa)) is PBC-B. The segment at residues 215–277 (ARRKRRNFSK…NKRIRYKKNT (63 aa)) is a DNA-binding region (homeobox; TALE-type). Disordered regions lie at residues 291-320 (ASTV…PLPL) and 355-378 (RAAP…AASN). A compositionally biased stretch (low complexity) spans 356-370 (AAPQPASSPAGESGS).

Belongs to the TALE/PBX homeobox family. Almost exclusively expressed in testis.

The protein resides in the nucleus. This chain is Pre-B-cell leukemia transcription factor 4 (Pbx4), found in Mus musculus (Mouse).